A 198-amino-acid chain; its full sequence is A-type ATP synthase subunit E (198 aa).

Belongs to the V-ATPase E subunit family. Has multiple subunits with at least A(3), B(3), C, D, E, F, H, I and proteolipid K(x).

The protein localises to the cell membrane. Component of the A-type ATP synthase that produces ATP from ADP in the presence of a proton gradient across the membrane. The protein is A-type ATP synthase subunit E of Pyrococcus horikoshii (strain ATCC 700860 / DSM 12428 / JCM 9974 / NBRC 100139 / OT-3).